Reading from the N-terminus, the 521-residue chain is MLQVVLGAPQRLLKEGRQSRKLVLVVVFVALLLDNMLLTVVVPIVPTFLYATEFKDSNSSLHRGPSVSSQQALTSPAFSTIFSFFDNTTTTVEEHVPFRVTWTNGTIPPPVTEASSVPKNNCLQGIEFLEEENVRIGILFASKALMQLLVNPFVGPLTNRIGYHIPMFVGFMIMFLSTLMFAFSGTYALLFVARTLQGIGSSFSSVAGLGMLASVYTDNYERGRAMGIALGGLALGLLVGAPFGSVMYEFVGKSSPFLILAFLALLDGALQLCILWPSKVSPESAMGTSLLTLLKDPYILVAAGSICLANMGVAILEPTLPIWMMQTMCSPEWQLGLAFLPASVAYLIGTNLFGVLANKMGRWLCSLVGMVAVGISLLCVPLAHNIFGLIGPNAGLGFAIGMVDSSLMPIMGYLVDLRHTSVYGSVYAIADVAFCVGFAIGPSTGGVIVQVIGFPWLMVIIGTINIIYAPLCCFLQNPPAKEEKRAILSQECPTETQMYTFQKPTKAFPLGENSDDPSSGE.

Residues 1 to 21 (MLQVVLGAPQRLLKEGRQSRK) are Cytoplasmic-facing. Residues 22 to 42 (LVLVVVFVALLLDNMLLTVVV) traverse the membrane as a helical segment. Topologically, residues 43–135 (PIVPTFLYAT…IEFLEEENVR (93 aa)) are lumenal, vesicle. N-linked (GlcNAc...) asparagine glycans are attached at residues N58, N87, and N104. A helical transmembrane segment spans residues 136-155 (IGILFASKALMQLLVNPFVG). Residues 156–164 (PLTNRIGYH) lie on the Cytoplasmic side of the membrane. The chain crosses the membrane as a helical span at residues 165 to 185 (IPMFVGFMIMFLSTLMFAFSG). Residues 186–194 (TYALLFVAR) lie on the Lumenal, vesicle side of the membrane. A helical membrane pass occupies residues 195–215 (TLQGIGSSFSSVAGLGMLASV). The Cytoplasmic portion of the chain corresponds to 216–224 (YTDNYERGR). Residues 225–247 (AMGIALGGLALGLLVGAPFGSVM) traverse the membrane as a helical segment. The Lumenal, vesicle portion of the chain corresponds to 248–253 (YEFVGK). Residues 254–276 (SSPFLILAFLALLDGALQLCILW) traverse the membrane as a helical segment. Residues 277-296 (PSKVSPESAMGTSLLTLLKD) lie on the Cytoplasmic side of the membrane. Residues 297 to 316 (PYILVAAGSICLANMGVAIL) form a helical membrane-spanning segment. The Lumenal, vesicle portion of the chain corresponds to 317 to 332 (EPTLPIWMMQTMCSPE). A helical membrane pass occupies residues 333-357 (WQLGLAFLPASVAYLIGTNLFGVLA). Topologically, residues 358-362 (NKMGR) are cytoplasmic. Residues 363–383 (WLCSLVGMVAVGISLLCVPLA) form a helical membrane-spanning segment. At 384-394 (HNIFGLIGPNA) the chain is on the lumenal, vesicle side. Residues 395-415 (GLGFAIGMVDSSLMPIMGYLV) traverse the membrane as a helical segment. Over 416–419 (DLRH) the chain is Cytoplasmic. Residues 420 to 440 (TSVYGSVYAIADVAFCVGFAI) traverse the membrane as a helical segment. Topologically, residues 441 to 445 (GPSTG) are lumenal, vesicle. The chain crosses the membrane as a helical span at residues 446–467 (GVIVQVIGFPWLMVIIGTINII). Topologically, residues 468–521 (YAPLCCFLQNPPAKEEKRAILSQECPTETQMYTFQKPTKAFPLGENSDDPSSGE) are cytoplasmic.

The protein belongs to the major facilitator superfamily. Vesicular transporter family. Adrenal gland.

The protein resides in the cytoplasmic vesicle. The protein localises to the secretory vesicle membrane. It is found in the secretory vesicle. Its subcellular location is the synaptic vesicle membrane. It catalyses the reaction serotonin(in) + 2 H(+)(out) = serotonin(out) + 2 H(+)(in). The catalysed reaction is (R)-noradrenaline(in) + 2 H(+)(out) = (R)-noradrenaline(out) + 2 H(+)(in). It carries out the reaction dopamine(in) + 2 H(+)(out) = dopamine(out) + 2 H(+)(in). With respect to regulation, strongly inhibited by reserpine, ketanserin and methamphetamine. Also inhibited weakly by tetrabenazine. Electrogenic antiporter that exchanges one cationic monoamine with two intravesicular protons across the membrane of secretory and synaptic vesicles. Uses the electrochemical proton gradient established by the V-type proton-pump ATPase to accumulate high concentrations of monoamines inside the vesicles prior to their release via exocytosis. Transports catecholamines and indolamines with higher affinity for serotonin. Regulates the transvesicular monoaminergic gradient that determines the quantal size. Mediates presynaptic monoaminergic vesicle transport in the amygdala and prefrontal brain regions related with emotion processing in response to environmental stimuli. The chain is Chromaffin granule amine transporter (Slc18a1) from Rattus norvegicus (Rat).